A 504-amino-acid polypeptide reads, in one-letter code: Probable cytosol aminopeptidase (504 aa).

2 residues coordinate Mn(2+): lysine 274 and aspartate 279. Lysine 286 is a catalytic residue. Mn(2+)-binding residues include aspartate 297, aspartate 356, and glutamate 358. Residue arginine 360 is part of the active site.

Belongs to the peptidase M17 family. Mn(2+) serves as cofactor.

The protein resides in the cytoplasm. The enzyme catalyses Release of an N-terminal amino acid, Xaa-|-Yaa-, in which Xaa is preferably Leu, but may be other amino acids including Pro although not Arg or Lys, and Yaa may be Pro. Amino acid amides and methyl esters are also readily hydrolyzed, but rates on arylamides are exceedingly low.. It catalyses the reaction Release of an N-terminal amino acid, preferentially leucine, but not glutamic or aspartic acids.. Its function is as follows. Presumably involved in the processing and regular turnover of intracellular proteins. Catalyzes the removal of unsubstituted N-terminal amino acids from various peptides. In Gloeobacter violaceus (strain ATCC 29082 / PCC 7421), this protein is Probable cytosol aminopeptidase.